Here is a 205-residue protein sequence, read N- to C-terminus: Putative 3-methyladenine DNA glycosylase (205 aa).

This sequence belongs to the DNA glycosylase MPG family.

The chain is Putative 3-methyladenine DNA glycosylase from Bacillus cereus (strain ZK / E33L).